Reading from the N-terminus, the 115-residue chain is MPKANNAVASRARRKRILKKAKGFWGSRGNILTVVKHAVDKAEQYAYRDRRAKKRTFRSLWIMRINAAARLNGTTYSKMVNAMSKKSIEIDRKTLAEIAVKDPAAFSQIVKAVIE.

It belongs to the bacterial ribosomal protein bL20 family.

In terms of biological role, binds directly to 23S ribosomal RNA and is necessary for the in vitro assembly process of the 50S ribosomal subunit. It is not involved in the protein synthesizing functions of that subunit. This chain is Large ribosomal subunit protein bL20, found in Chlorobium phaeobacteroides (strain DSM 266 / SMG 266 / 2430).